The chain runs to 199 residues: Recombination protein RecR (199 aa).

Residues Cys-58–Cys-73 form a C4-type zinc finger. The Toprim domain maps to Thr-81–Pro-176.

This sequence belongs to the RecR family.

Its function is as follows. May play a role in DNA repair. It seems to be involved in an RecBC-independent recombinational process of DNA repair. It may act with RecF and RecO. The chain is Recombination protein RecR from Ruminiclostridium cellulolyticum (strain ATCC 35319 / DSM 5812 / JCM 6584 / H10) (Clostridium cellulolyticum).